Here is a 354-residue protein sequence, read N- to C-terminus: Alanine racemase (354 aa).

K33 functions as the Proton acceptor; specific for D-alanine in the catalytic mechanism. N6-(pyridoxal phosphate)lysine is present on K33. R127 lines the substrate pocket. Residue Y251 is the Proton acceptor; specific for L-alanine of the active site. M299 contacts substrate.

Belongs to the alanine racemase family. Pyridoxal 5'-phosphate serves as cofactor.

It carries out the reaction L-alanine = D-alanine. It participates in amino-acid biosynthesis; D-alanine biosynthesis; D-alanine from L-alanine: step 1/1. Functionally, catalyzes the interconversion of L-alanine and D-alanine. May also act on other amino acids. The sequence is that of Alanine racemase (alr) from Fusobacterium nucleatum subsp. nucleatum (strain ATCC 25586 / DSM 15643 / BCRC 10681 / CIP 101130 / JCM 8532 / KCTC 2640 / LMG 13131 / VPI 4355).